A 54-amino-acid chain; its full sequence is Secreted virulence factor MC69 (54 aa).

Residues 1-16 (MKAAFVLALCASLASA) form the signal peptide. Cys36 and Cys46 are disulfide-bonded.

Belongs to the MC69 virulence factor family.

It is found in the secreted. Functionally, secreted protein required for appressorial penetration of intact host epidermal cells and for pathogenicity. The polypeptide is Secreted virulence factor MC69 (Pyricularia oryzae (strain 70-15 / ATCC MYA-4617 / FGSC 8958) (Rice blast fungus)).